The chain runs to 206 residues: Protein tyrosine phosphatase receptor type C-associated protein (206 aa).

A helical membrane pass occupies residues 34-54 (VTVVLLLLLLLLLATGLALAW). Residues 98–173 (GSTDNDLERQ…PGPASAGGSA (76 aa)) are disordered. Phosphoserine is present on residues S99 and S153. Residues 161-173 (LGSPGPASAGGSA) are compositionally biased toward low complexity.

As to quaternary structure, interacts with CD45/PTPRC. Phosphorylated on tyrosine residues.

The protein localises to the membrane. This Homo sapiens (Human) protein is Protein tyrosine phosphatase receptor type C-associated protein (PTPRCAP).